The following is a 373-amino-acid chain: Probable neutral protease 2 homolog MCYG_05201 (373 aa).

Residues 1–19 (MQFFTALAAVGALVAPALA) form the signal peptide. The propeptide occupies 20–187 (LPTQVPANQS…AHIVGTIDKR (168 aa)). Cystine bridges form between Cys195-Cys265 and Cys272-Cys290. Residue His314 coordinates Zn(2+). Glu315 is a catalytic residue. Zn(2+) contacts are provided by His318 and Asp329.

Belongs to the peptidase M35 family. Zn(2+) serves as cofactor.

Its subcellular location is the secreted. The enzyme catalyses Preferential cleavage of bonds with hydrophobic residues in P1'. Also 3-Asn-|-Gln-4 and 8-Gly-|-Ser-9 bonds in insulin B chain.. Probable secreted metalloprotease that shows high activities on basic nuclear substrates such as histone and protamine. May be involved in virulence. This Arthroderma otae (strain ATCC MYA-4605 / CBS 113480) (Microsporum canis) protein is Probable neutral protease 2 homolog MCYG_05201.